The primary structure comprises 150 residues: MKSKRHTKILEIISSKEIETQEDLAEELKLQGFDVTQATVSRDIKNLKLIKIQGASGNYKYVVSSGEEKNIIDRLSNILSNTVISAENVDKMVVIKTISGSGSAAAEAIDNLEGSDVAGTVAGDNTIFILLRSLEKAEELVAKIRKRISL.

This sequence belongs to the ArgR family.

Its subcellular location is the cytoplasm. It functions in the pathway amino-acid biosynthesis; L-arginine biosynthesis [regulation]. Functionally, regulates arginine biosynthesis genes. The protein is Arginine repressor of Clostridium botulinum (strain Eklund 17B / Type B).